Here is a 396-residue protein sequence, read N- to C-terminus: Elongation factor Tu (396 aa).

The tr-type G domain maps to 10–206 (KPHCNIGTIG…AVDSYIPQPE (197 aa)). Residues 19–26 (GHVDHGKT) form a G1 region. Residue 19–26 (GHVDHGKT) coordinates GTP. Mg(2+) is bound at residue Thr-26. The interval 60 to 64 (GITIS) is G2. A G3 region spans residues 81–84 (DCPG). Residues 81-85 (DCPGH) and 136-139 (NKVD) each bind GTP. The tract at residues 136 to 139 (NKVD) is G4. Positions 174–176 (SAV) are G5.

This sequence belongs to the TRAFAC class translation factor GTPase superfamily. Classic translation factor GTPase family. EF-Tu/EF-1A subfamily. As to quaternary structure, monomer.

The protein localises to the cytoplasm. It catalyses the reaction GTP + H2O = GDP + phosphate + H(+). Its function is as follows. GTP hydrolase that promotes the GTP-dependent binding of aminoacyl-tRNA to the A-site of ribosomes during protein biosynthesis. This is Elongation factor Tu from Rhizorhabdus wittichii (strain DSM 6014 / CCUG 31198 / JCM 15750 / NBRC 105917 / EY 4224 / RW1) (Sphingomonas wittichii).